A 154-amino-acid chain; its full sequence is Pro-corazonin (154 aa).

The first 19 residues, 1-19 (MLRLLLLPLFLFTLSMCMG), serve as a signal peptide directing secretion. Gln20 carries the post-translational modification Pyrrolidone carboxylic acid. Asn30 carries the asparagine amide modification. Residues 70-154 (LERCLSQLQR…SAEPNVFGKH (85 aa)) constitute a propeptide that is removed on maturation. Residues 91–119 (DFNANRVDPDPENSAHPRLSNSNGENVLY) are disordered. Over residues 109–119 (LSNSNGENVLY) the composition is skewed to polar residues.

This sequence belongs to the corazonin family. As to expression, from late embryo to larva, expression is consistently detected in three neuronal groups: dorso-lateral neurons (DL), dorso-medial neurons (DM), and neurons in the ventral nerve cord (vCrz). Both the vCrz and DM groups die via programmed cell death during metamorphosis, whereas the DL neurons persist to adulthood. In adults, expression is seen in a cluster of six to eight neurons per lobe in the pars lateralis (DLP), in numerous neuronal cells in the optic lobes, and in a novel group of four abdominal ganglionic neurons present only in males (ms-aCrz). Projections of the ms-aCrz neurons terminate within the ventral nerve cord, implying a role as interneurons. Terminals of the DLP neurons are found in the retrocerebral complex that produces juvenile hormone and adipokinetic hormone, located in the vicinity of terminals emanating from PDF-containing pacemaking neurons.

The protein resides in the secreted. Cardioactive peptide. Corazonin is probably involved in the physiological regulation of the heart beat. Clock (Clk) and cycle (cyc) proteins negatively regulate Crz transcription in a cell-specific manner. In Drosophila melanogaster (Fruit fly), this protein is Pro-corazonin (Crz).